The sequence spans 215 residues: Urease accessory protein UreG (215 aa).

Residues 1–21 (MNAPAPSSARRTKKLPPLRVG) form a disordered region. Position 24 to 31 (24 to 31 (GPVGSGKT)) interacts with GTP.

This sequence belongs to the SIMIBI class G3E GTPase family. UreG subfamily. In terms of assembly, homodimer. UreD, UreF and UreG form a complex that acts as a GTP-hydrolysis-dependent molecular chaperone, activating the urease apoprotein by helping to assemble the nickel containing metallocenter of UreC. The UreE protein probably delivers the nickel.

It localises to the cytoplasm. Its function is as follows. Facilitates the functional incorporation of the urease nickel metallocenter. This process requires GTP hydrolysis, probably effectuated by UreG. The sequence is that of Urease accessory protein UreG from Burkholderia lata (strain ATCC 17760 / DSM 23089 / LMG 22485 / NCIMB 9086 / R18194 / 383).